The sequence spans 432 residues: Tol-Pal system protein TolB (432 aa).

The N-terminal stretch at 1–24 is a signal peptide; the sequence is MKLVTRMWSILIVFFLAVLQPAQA.

Belongs to the TolB family. The Tol-Pal system is composed of five core proteins: the inner membrane proteins TolA, TolQ and TolR, the periplasmic protein TolB and the outer membrane protein Pal. They form a network linking the inner and outer membranes and the peptidoglycan layer.

It is found in the periplasm. Part of the Tol-Pal system, which plays a role in outer membrane invagination during cell division and is important for maintaining outer membrane integrity. The polypeptide is Tol-Pal system protein TolB (Pasteurella multocida (strain Pm70)).